The following is a 1281-amino-acid chain: Tubulin polyglutamylase TTLL5 (1281 aa).

One can recognise a TTL domain in the interval Arg-62–Ser-407. ATP is bound by residues Lys-180, Arg-186 to Gly-187, Ser-208 to Ile-211, and Lys-221 to Asp-223. Arg-186 lines the a protein pocket. Arg-247 is a binding site for L-glutamate. Thr-268–Asn-269 provides a ligand contact to ATP. Residues Tyr-270, Ser-271, and Lys-293 each contribute to the L-glutamate site. Residues Asp-353, Glu-366, and Asn-368 each contribute to the Mg(2+) site. A c-MTBD region region spans residues Pro-378 to Thr-488. L-glutamate is bound at residue Lys-384. Disordered stretches follow at residues Met-577 to Asn-614, Ser-1072 to Gly-1114, and Ser-1199 to Ile-1281. Positions Glu-584–Gln-604 are enriched in acidic residues. Polar residues-rich tracts occupy residues Ser-1086–Thr-1113, Ser-1199–Pro-1212, Ala-1240–Asn-1263, and Ile-1270–Ile-1281.

The protein belongs to the tubulin--tyrosine ligase family. In terms of assembly, interacts with the transcriptional coactivators NCOA1/SRC-1 and NCOA2/TIF2. It depends on Mg(2+) as a cofactor. Expressed in the retina, found in the rod and cone photoreceptors (at protein level). Widely expressed with highest levels in heart and skeletal muscle and low levels in other tissues.

The protein localises to the cell projection. The protein resides in the cilium. It localises to the cytoplasm. It is found in the cytoskeleton. Its subcellular location is the cilium basal body. The protein localises to the nucleus. It catalyses the reaction L-glutamyl-[protein] + L-glutamate + ATP = gamma-L-glutamyl-L-glutamyl-[protein] + ADP + phosphate + H(+). The catalysed reaction is (L-glutamyl)(n)-gamma-L-glutamyl-L-glutamyl-[protein] + L-glutamate + ATP = (L-glutamyl)(n+1)-gamma-L-glutamyl-L-glutamyl-[protein] + ADP + phosphate + H(+). Functionally, polyglutamylase which modifies tubulin, generating polyglutamate side chains on the gamma-carboxyl group of specific glutamate residues within the C-terminal tail of tubulin. Preferentially mediates ATP-dependent initiation step of the polyglutamylation reaction over the elongation step. Preferentially modifies the alpha-tubulin tail over a beta-tail. Required for CCSAP localization to both polyglutamylated spindle and cilia microtubules. Increases the effects of transcriptional coactivator NCOA2/TIF2 in glucocorticoid receptor-mediated repression and induction and in androgen receptor-mediated induction. The protein is Tubulin polyglutamylase TTLL5 of Homo sapiens (Human).